The sequence spans 1862 residues: Protein RRP5 homolog (1862 aa).

The tract at residues 1–56 (MANLEESFPRGGTRKLHKSEKSSQQVVEQDNLFDVSTEEGPIKRKKSQKGPAKTKK) is disordered. Ala-2 is modified (N-acetylalanine). Ser-7 is subject to Phosphoserine. The span at 43–56 (KRKKSQKGPAKTKK) shows a compositional bias: basic residues. S1 motif domains follow at residues 83-171 (GMRI…LSVN), 187-258 (GMLL…LSVE), 281-346 (GLLV…LSLR), and 365-436 (GAVL…LSLR). At Ser-438 the chain carries Phosphoserine. 5 consecutive S1 motif domains span residues 453 to 522 (GTVV…MTLK), 542 to 611 (GLQT…LSFR), 636 to 707 (GQLV…LCRK), 729 to 798 (GMLL…LSLR), and 846 to 911 (GMVL…VSLH). The interval 999 to 1036 (SKRTRMPVQRDSETVDDKGEEKEEEEEEEEKEEENLTV) is disordered. Residues 1006 to 1019 (VQRDSETVDDKGEE) show a composition bias toward basic and acidic residues. The segment covering 1020–1033 (KEEEEEEEEKEEEN) has biased composition (acidic residues). 4 consecutive S1 motif domains span residues 1047 to 1120 (GDKV…ISHP), 1160 to 1233 (GQTV…LSLI), 1241 to 1309 (GEVA…LSLR), and 1335 to 1407 (GQLL…LSLL). Disordered stretches follow at residues 1406–1520 (LLPS…STEV) and 1545–1577 (REESSDSEDEQPHQAKKKKGKKERELEKQKAEK). Composition is skewed to basic and acidic residues over residues 1423–1437 (PKQEERSGGAEEGQK) and 1445–1454 (RREEKEEPQK). A Glycyl lysine isopeptide (Lys-Gly) (interchain with G-Cter in SUMO2) cross-link involves residue Lys-1424. Phosphoserine is present on residues Ser-1468 and Ser-1490. Basic and acidic residues predominate over residues 1566-1577 (KERELEKQKAEK). HAT repeat units follow at residues 1590–1622 (GRQPESADDFDRLVLSSPNSSILWLQYMAFHLQ), 1696–1728 (EKYKEAGELYNRMLKRFRQEKAVWIKYGAFVLG), 1766–1798 (GDVERAKAIFENTLSTYPKRTDVWSVYIDMTIK), and 1800–1835 (GSQTAVRDIFERVIHLSLAPKRMKFFFKRYLDYEKQ).

As to quaternary structure, interacts with NF-kappa-B p50/NFKB1 and NF-kappa-B p65/RELA. As to expression, ubiquitous.

It localises to the nucleus. It is found in the nucleolus. In terms of biological role, essential for the generation of mature 18S rRNA, specifically necessary for cleavages at sites A0, 1 and 2 of the 47S precursor. Directly interacts with U3 snoRNA. This Mus musculus (Mouse) protein is Protein RRP5 homolog (Pdcd11).